The chain runs to 290 residues: MIEVEIDKDSGFCFGVVTAIESAERELGNTDTLYCLGDIVHNSLEVERLEHMGLHTIDHEGLSRLRDRKVLLRAHGEPPSTYALAKRNNITIIDATCPVVLRLQRKIHKCYQETRANNTQLVIYGKKGHAEVNGLVGQTEGTAIVIEKIEDLDRLDFTRAISLFSQTTKSLDGFKAVVAEIKQRMAEGVEFNYYDTICRQVANRLPNIKAFASSHDWVYFVAGRKSSNGKMLFEECRKANPNTLFISEVSEITEPLPEGVRRVGVCGATSTPKWLMEEVAVRIKELNASE.

Cys-13 serves as a coordination point for [4Fe-4S] cluster. (2E)-4-hydroxy-3-methylbut-2-enyl diphosphate-binding residues include His-41 and His-75. Positions 41 and 75 each coordinate dimethylallyl diphosphate. Isopentenyl diphosphate-binding residues include His-41 and His-75. Cys-97 is a binding site for [4Fe-4S] cluster. (2E)-4-hydroxy-3-methylbut-2-enyl diphosphate is bound at residue His-129. Residue His-129 participates in dimethylallyl diphosphate binding. His-129 contributes to the isopentenyl diphosphate binding site. Glu-131 serves as the catalytic Proton donor. Thr-167 lines the (2E)-4-hydroxy-3-methylbut-2-enyl diphosphate pocket. Cys-198 contributes to the [4Fe-4S] cluster binding site. (2E)-4-hydroxy-3-methylbut-2-enyl diphosphate is bound by residues Ser-226, Ser-227, Asn-228, and Ser-270. Ser-226, Ser-227, Asn-228, and Ser-270 together coordinate dimethylallyl diphosphate. Residues Ser-226, Ser-227, Asn-228, and Ser-270 each contribute to the isopentenyl diphosphate site.

This sequence belongs to the IspH family. Requires [4Fe-4S] cluster as cofactor.

The enzyme catalyses isopentenyl diphosphate + 2 oxidized [2Fe-2S]-[ferredoxin] + H2O = (2E)-4-hydroxy-3-methylbut-2-enyl diphosphate + 2 reduced [2Fe-2S]-[ferredoxin] + 2 H(+). It catalyses the reaction dimethylallyl diphosphate + 2 oxidized [2Fe-2S]-[ferredoxin] + H2O = (2E)-4-hydroxy-3-methylbut-2-enyl diphosphate + 2 reduced [2Fe-2S]-[ferredoxin] + 2 H(+). The protein operates within isoprenoid biosynthesis; dimethylallyl diphosphate biosynthesis; dimethylallyl diphosphate from (2E)-4-hydroxy-3-methylbutenyl diphosphate: step 1/1. It participates in isoprenoid biosynthesis; isopentenyl diphosphate biosynthesis via DXP pathway; isopentenyl diphosphate from 1-deoxy-D-xylulose 5-phosphate: step 6/6. Its function is as follows. Catalyzes the conversion of 1-hydroxy-2-methyl-2-(E)-butenyl 4-diphosphate (HMBPP) into a mixture of isopentenyl diphosphate (IPP) and dimethylallyl diphosphate (DMAPP). Acts in the terminal step of the DOXP/MEP pathway for isoprenoid precursor biosynthesis. In Parabacteroides distasonis (strain ATCC 8503 / DSM 20701 / CIP 104284 / JCM 5825 / NCTC 11152), this protein is 4-hydroxy-3-methylbut-2-enyl diphosphate reductase.